Reading from the N-terminus, the 180-residue chain is MFSKAFSFQKVFAPARRRLLVLLLAALMAGFGWGLAPVFAARDIPAVALSPTESITFTEAQLAKGKKLFNTACAQCHVGGQTYPNPDVSLKLSDLEGATPPRDNVLAIVDYIKNPVTYDGVESLLEYHPNTQLTSEYPRLRNLTDEDLKLIAGYILVQAKTVPGWGGTKNESHSDLSAYL.

Positions 1–40 (MFSKAFSFQKVFAPARRRLLVLLLAALMAGFGWGLAPVFA) are cleaved as a signal peptide. Positions 73, 76, 77, and 128 each coordinate heme c.

The protein belongs to the cytochrome c family. PsbV subfamily. In terms of assembly, PSII is composed of 1 copy each of membrane proteins PsbA, PsbB, PsbC, PsbD, PsbE, PsbF, PsbH, PsbI, PsbJ, PsbK, PsbL, PsbM, PsbT, PsbX, PsbY, PsbZ, Psb30/Ycf12, peripheral proteins PsbO, CyanoQ (PsbQ), PsbU, PsbV and a large number of cofactors. It forms dimeric complexes. Heme c serves as cofactor.

Its subcellular location is the cellular thylakoid membrane. In terms of biological role, one of the extrinsic, lumenal subunits of photosystem II (PSII). PSII is a light-driven water plastoquinone oxidoreductase, using light energy to abstract electrons from H(2)O, generating a proton gradient subsequently used for ATP formation. The extrinsic proteins stabilize the structure of photosystem II oxygen-evolving complex (OEC), the ion environment of oxygen evolution and protect the OEC against heat-induced inactivation. Low-potential cytochrome c that plays a role in the OEC of PSII. The sequence is that of Photosystem II extrinsic protein V from Synechococcus sp. (strain JA-2-3B'a(2-13)) (Cyanobacteria bacterium Yellowstone B-Prime).